Consider the following 227-residue polypeptide: Ribose-5-phosphate isomerase A (227 aa).

Residues 26 to 29, 82 to 85, and 95 to 98 each bind substrate; these read TGST, DGAD, and KGGG. Glu104 functions as the Proton acceptor in the catalytic mechanism. Position 122 (Lys122) interacts with substrate.

This sequence belongs to the ribose 5-phosphate isomerase family. Homodimer.

It catalyses the reaction aldehydo-D-ribose 5-phosphate = D-ribulose 5-phosphate. It participates in carbohydrate degradation; pentose phosphate pathway; D-ribose 5-phosphate from D-ribulose 5-phosphate (non-oxidative stage): step 1/1. Its function is as follows. Catalyzes the reversible conversion of ribose-5-phosphate to ribulose 5-phosphate. This chain is Ribose-5-phosphate isomerase A, found in Streptococcus equi subsp. zooepidemicus (strain MGCS10565).